Reading from the N-terminus, the 234-residue chain is uncharacterized protein (234 aa).

Residues 5 to 234 (MELVDVWKIY…ERRGVVYGDT (230 aa)) form the ABC transporter domain. 41–48 (GPSGSGKS) contacts ATP.

It belongs to the ABC transporter superfamily.

This is an uncharacterized protein from Thermotoga maritima (strain ATCC 43589 / DSM 3109 / JCM 10099 / NBRC 100826 / MSB8).